A 411-amino-acid chain; its full sequence is Transforming growth factor beta regulator 1 (411 aa).

Disordered stretches follow at residues 1 to 29 and 119 to 146; these read MSLLDGLASSPRAPLQSSKARMKKLPKKS and GPISGPSTGAEEPFGKKTKKEKKEKGKE. At Ser-2 the chain carries N-acetylserine. At Ser-10 the chain carries Phosphoserine. Residues 182 to 241 form the FYR N-terminal domain; the sequence is VFPIGLGGLTVYSLGEIITDRPGFHDESAIYPVGYCSTRIYASMKCPDQKCLYTCQIKDG. Residues 242-321 form the FYR C-terminal domain; sequence GVQPQFEIVP…RKCINYQWVK (80 aa).

It belongs to the TBRG1 family. In terms of assembly, interacts with CDKN2A and MDM2. Post-translationally, ubiquitinated; mediated by MDM2 and leading to its subsequent proteasomal degradation. In terms of tissue distribution, widely expressed at low levels in most tissues, with highest levels in pancreas, lung and liver. Expression is decreased in primary tumors including lung, liver, breast, pancreas and kidney carcinomas, chronic lymphocytic leukemia and diffuse large B-cell lymphoma.

Its subcellular location is the nucleus. Acts as a growth inhibitor. Can activate p53/TP53, causes G1 arrest and collaborates with CDKN2A to restrict proliferation, but does not require either protein to inhibit DNA synthesis. Redistributes CDKN2A into the nucleoplasm. Involved in maintaining chromosomal stability. This chain is Transforming growth factor beta regulator 1 (TBRG1), found in Homo sapiens (Human).